The sequence spans 208 residues: UPF0711 protein C18orf21 homolog (208 aa).

Positions 123–137 are enriched in basic residues; it reads SKHKSTPGSASKHRT. Disordered stretches follow at residues 123–180 and 189–208; these read SKHK…KSSP and MLEN…LSSL. Residues 138 to 152 show a composition bias toward polar residues; that stretch reads PQTVNWATPKSVANR. A compositionally biased stretch (low complexity) spans 153–180; it reads TPSSTPRSASSNTSSSSSSKSSSVKSSP.

This sequence belongs to the UPF0711 family.

This Danio rerio (Zebrafish) protein is UPF0711 protein C18orf21 homolog.